A 230-amino-acid polypeptide reads, in one-letter code: Large ribosomal subunit protein uL1 (230 aa).

It belongs to the universal ribosomal protein uL1 family. In terms of assembly, part of the 50S ribosomal subunit.

Its function is as follows. Binds directly to 23S rRNA. The L1 stalk is quite mobile in the ribosome, and is involved in E site tRNA release. Functionally, protein L1 is also a translational repressor protein, it controls the translation of the L11 operon by binding to its mRNA. The polypeptide is Large ribosomal subunit protein uL1 (Erythrobacter litoralis (strain HTCC2594)).